Consider the following 251-residue polypeptide: Core protein VP8 (251 aa).

The propeptide at 1-32 is removed by core protease OPG083/I7; it reads MSLLLENLIEEDTIFFAGSISEYDDLQMVIAG.

This sequence belongs to the orthopoxvirus OPG098 family. Undergoes morphogenesis-associated proteolysis which cleaves the 28 kDa to a 25-kDa product. Proteolytic cleavage of major core proteins P4a (OPG136/A10L), P4b (OPG129/A3L), and VP8 (OPG098/L4R), which occurs at a late stage of core formation, is required for production of infectious mature virions (MV).

It is found in the virion. Its subcellular location is the host cytoplasm. Major core structural protein. This chain is Core protein VP8 (OPG098), found in Vaccinia virus (strain Western Reserve) (VACV).